The chain runs to 382 residues: Farnesyl diphosphate synthase (382 aa).

Isopentenyl diphosphate is bound by residues Lys81, Arg84, and Gln120. Positions 127 and 131 each coordinate Mg(2+). Arg136 lines the dimethylallyl diphosphate pocket. Position 137 (Arg137) interacts with isopentenyl diphosphate. 5 residues coordinate dimethylallyl diphosphate: Lys230, Thr231, Gln270, Lys287, and Lys296.

The protein belongs to the FPP/GGPP synthase family. It depends on Mg(2+) as a cofactor.

The protein localises to the cytoplasm. It carries out the reaction isopentenyl diphosphate + dimethylallyl diphosphate = (2E)-geranyl diphosphate + diphosphate. The enzyme catalyses isopentenyl diphosphate + (2E)-geranyl diphosphate = (2E,6E)-farnesyl diphosphate + diphosphate. Its pathway is isoprenoid biosynthesis; farnesyl diphosphate biosynthesis; farnesyl diphosphate from geranyl diphosphate and isopentenyl diphosphate: step 1/1. The protein operates within isoprenoid biosynthesis; geranyl diphosphate biosynthesis; geranyl diphosphate from dimethylallyl diphosphate and isopentenyl diphosphate: step 1/1. With respect to regulation, inhibited by aminobisphosphonate drugs (aBP), such as risedronate and alendronate. In terms of biological role, key enzyme in isoprenoid biosynthesis which catalyzes the formation of farnesyl diphosphate (FPP), a sterol precursor. Involved in the inhibition of cell growth. The sequence is that of Farnesyl diphosphate synthase (fps) from Dictyostelium discoideum (Social amoeba).